The chain runs to 491 residues: MRRDINNFLFGERMELFEILKQKIKEKEVITPKEMAIIDDNAEFLGIQKILLMENAGKAVYEEIKDIDAEEFIIFCGTGNNGGDGFVVARHLGKGDVILIGKESEIKTYEARENFKILKNLAEFGNIRIREIKWAEEVNDIFERLKNKKAVIIDAMIGTGVKGELREPFKTIVDKINELKQINKNIFVISVDVETGHLESDLTITFHKRKTINKDNAIVKKIGIPKEAEYIVGWGDLKALRKRDSNSHKGQNGKVLIIGGSKDFYGAPILAGLAALKIVDLVGILSVGKVIDKVNHPEFIMYRVEGDYLSSQHVDYTLEIAKKYDVVVLGNGLGANNRTKAFLNEFLAKYDGKVVIDADAIKVIDYNNFEFSENYIFTPHKREFEYMGIDLDNIENIKSTIVLKGKYDIIFNANNLKINKTGNAGLTKGGTGDVLAGLIGALFAVNEAFLSACCGAFINGYAGDLLLKEKGYYYTPLDLIEKIPNVLKIFQ.

An NAD(P)H-hydrate epimerase region spans residues 1–230 (MRRDINNFLF…KIGIPKEAEY (230 aa)). Residues 35–230 (MAIIDDNAEF…KIGIPKEAEY (196 aa)) enclose the YjeF N-terminal domain. Residues 80–84 (NNGGD) are NADPHX 1; for epimerase activity. The K(+) site is built by asparagine 81 and aspartate 154. Positions 158–164 (GTGVKGE) are NADPHX 1; for epimerase activity. Aspartate 192 serves as a coordination point for (6S)-NADPHX. Residue threonine 195 participates in K(+) binding. One can recognise a YjeF C-terminal domain in the interval 232–490 (VGWGDLKALR…EKIPNVLKIF (259 aa)). Residues 232-491 (VGWGDLKALR…KIPNVLKIFQ (260 aa)) are ADP-dependent (S)-NAD(P)H-hydrate dehydratase. Glycine 332 contributes to the (6S)-NADPHX binding site. Residues 380–386 (HKREFEY) form an NADPHX 2; for dehydratase activity region. ADP contacts are provided by residues 404-408 (KGKYD) and 423-432 (NAGLTKGGTG). Aspartate 433 is a binding site for (6S)-NADPHX.

The protein in the N-terminal section; belongs to the NnrE/AIBP family. In the C-terminal section; belongs to the NnrD/CARKD family. The cofactor is K(+).

It catalyses the reaction (6S)-NADHX + ADP = AMP + phosphate + NADH + H(+). The catalysed reaction is (6S)-NADPHX + ADP = AMP + phosphate + NADPH + H(+). The enzyme catalyses (6R)-NADHX = (6S)-NADHX. It carries out the reaction (6R)-NADPHX = (6S)-NADPHX. Functionally, bifunctional enzyme that catalyzes the epimerization of the S- and R-forms of NAD(P)HX and the dehydration of the S-form of NAD(P)HX at the expense of ADP, which is converted to AMP. This allows the repair of both epimers of NAD(P)HX, a damaged form of NAD(P)H that is a result of enzymatic or heat-dependent hydration. This chain is Bifunctional NAD(P)H-hydrate repair enzyme Nnr (nnr), found in Methanocaldococcus jannaschii (strain ATCC 43067 / DSM 2661 / JAL-1 / JCM 10045 / NBRC 100440) (Methanococcus jannaschii).